The chain runs to 253 residues: Mediator of RNA polymerase II transcription subunit 19 (253 aa).

2 disordered regions span residues 18–49 (EQYS…TLKT) and 157–253 (GPLP…TQVF). A compositionally biased stretch (low complexity) spans 21 to 40 (SPKSSPRAGGAGGRSPVVAR). 2 stretches are compositionally biased toward basic residues: residues 165–183 (HLKS…KHKY) and 220–233 (RKKR…KKQR).

It belongs to the Mediator complex subunit 19 family. In terms of assembly, component of the Mediator complex.

It is found in the nucleus. Component of the Mediator complex, a coactivator involved in the regulated transcription of nearly all RNA polymerase II-dependent genes. Mediator functions as a bridge to convey information from gene-specific regulatory proteins to the basal RNA polymerase II transcription machinery. Mediator is recruited to promoters by direct interactions with regulatory proteins and serves as a scaffold for the assembly of a functional preinitiation complex with RNA polymerase II and the general transcription factors. This chain is Mediator of RNA polymerase II transcription subunit 19 (MED19), found in Aedes aegypti (Yellowfever mosquito).